Consider the following 670-residue polypeptide: DNA ligase (670 aa).

NAD(+) is bound by residues 34–38 (DAEYD), 83–84 (SL), and Glu-117. Lys-119 functions as the N6-AMP-lysine intermediate in the catalytic mechanism. NAD(+) is bound by residues Arg-140, Glu-177, Lys-293, and Lys-317. Zn(2+)-binding residues include Cys-411, Cys-414, Cys-429, and Cys-434. Residues 591–670 (KVGGRFTGKT…DEFLAMLEEG (80 aa)) form the BRCT domain.

This sequence belongs to the NAD-dependent DNA ligase family. LigA subfamily. The cofactor is Mg(2+). Requires Mn(2+) as cofactor.

It catalyses the reaction NAD(+) + (deoxyribonucleotide)n-3'-hydroxyl + 5'-phospho-(deoxyribonucleotide)m = (deoxyribonucleotide)n+m + AMP + beta-nicotinamide D-nucleotide.. In terms of biological role, DNA ligase that catalyzes the formation of phosphodiester linkages between 5'-phosphoryl and 3'-hydroxyl groups in double-stranded DNA using NAD as a coenzyme and as the energy source for the reaction. It is essential for DNA replication and repair of damaged DNA. This is DNA ligase from Geobacter sulfurreducens (strain ATCC 51573 / DSM 12127 / PCA).